The following is a 175-amino-acid chain: Large ribosomal subunit protein uL10 (175 aa).

Belongs to the universal ribosomal protein uL10 family. As to quaternary structure, part of the ribosomal stalk of the 50S ribosomal subunit. The N-terminus interacts with L11 and the large rRNA to form the base of the stalk. The C-terminus forms an elongated spine to which L12 dimers bind in a sequential fashion forming a multimeric L10(L12)X complex.

In terms of biological role, forms part of the ribosomal stalk, playing a central role in the interaction of the ribosome with GTP-bound translation factors. In Synechococcus sp. (strain WH7803), this protein is Large ribosomal subunit protein uL10.